The following is a 302-amino-acid chain: Cell division protein FtsQ (302 aa).

Over 1-43 (MRPVDKKPVDRKIERETRYLRRDPAPSRWSYRYQRLMLTPAFR) the chain is Cytoplasmic. A helical transmembrane segment spans residues 44–64 (AGVRLGTPVIIIALAVAVVFG). At 65–302 (RADSRDWIMG…SMPGRSAGRG (238 aa)) the chain is on the periplasmic side. In terms of domain architecture, POTRA spans 89–156 (FMVGSFAITG…GVLQIVIEER (68 aa)).

This sequence belongs to the FtsQ/DivIB family. FtsQ subfamily.

Its subcellular location is the cell inner membrane. Functionally, essential cell division protein. The chain is Cell division protein FtsQ from Ketogulonicigenium vulgare (strain Y25).